The following is a 94-amino-acid chain: Ig kappa-B5 chain V region 2699 (94 aa).

Positions Ala1 to Cys23 are framework-1. Residues Gln24–Ala34 form a complementarity-determining-1 region. The framework-2 stretch occupies residues Trp35 to Tyr49. The complementarity-determining-2 stretch occupies residues Ser50–Ser56. The interval Gly57–Val82 is framework-3. Position 83 (Ser83) is a region of interest, complementarity-determining-3. Residues Phe84–Glu93 are framework-4.

The sequence is that of Ig kappa-B5 chain V region 2699 from Oryctolagus cuniculus (Rabbit).